The chain runs to 219 residues: Cytochrome c oxidase assembly protein CtaG (219 aa).

Residues 1–13 (MDATDQGKSTSTT) are compositionally biased toward polar residues. The tract at residues 1–24 (MDATDQGKSTSTTAAQAAPGKAAP) is disordered. The Cytoplasmic portion of the chain corresponds to 1–29 (MDATDQGKSTSTTAAQAAPGKAAPRRGIG). Positions 14–24 (AAQAAPGKAAP) are enriched in low complexity. Residues 30–52 (RDALVGGICGAVVVLMIGASYAA) form a helical; Signal-anchor for type II membrane protein membrane-spanning segment. Topologically, residues 53–219 (VPFYNWFCRA…GEPDKPRGSL (167 aa)) are periplasmic.

Belongs to the COX11/CtaG family.

It localises to the cell inner membrane. Functionally, exerts its effect at some terminal stage of cytochrome c oxidase synthesis, probably by being involved in the insertion of the copper B into subunit I. The chain is Cytochrome c oxidase assembly protein CtaG from Bradyrhizobium sp. (strain ORS 278).